The following is a 142-amino-acid chain: Large ribosomal subunit protein uL11 (142 aa).

Belongs to the universal ribosomal protein uL11 family. Part of the ribosomal stalk of the 50S ribosomal subunit. Interacts with L10 and the large rRNA to form the base of the stalk. L10 forms an elongated spine to which L12 dimers bind in a sequential fashion forming a multimeric L10(L12)X complex. Post-translationally, one or more lysine residues are methylated.

Functionally, forms part of the ribosomal stalk which helps the ribosome interact with GTP-bound translation factors. The chain is Large ribosomal subunit protein uL11 from Yersinia pseudotuberculosis serotype O:1b (strain IP 31758).